The primary structure comprises 263 residues: 3-methyl-2-oxobutanoate hydroxymethyltransferase (263 aa).

2 residues coordinate Mg(2+): D43 and D82. 3-methyl-2-oxobutanoate contacts are provided by residues 43-44, D82, and K111; that span reads DS. A Mg(2+)-binding site is contributed by E113. Residue E179 is the Proton acceptor of the active site.

It belongs to the PanB family. As to quaternary structure, homodecamer; pentamer of dimers. Mg(2+) serves as cofactor.

Its subcellular location is the cytoplasm. The catalysed reaction is 3-methyl-2-oxobutanoate + (6R)-5,10-methylene-5,6,7,8-tetrahydrofolate + H2O = 2-dehydropantoate + (6S)-5,6,7,8-tetrahydrofolate. Its pathway is cofactor biosynthesis; (R)-pantothenate biosynthesis; (R)-pantoate from 3-methyl-2-oxobutanoate: step 1/2. In terms of biological role, catalyzes the reversible reaction in which hydroxymethyl group from 5,10-methylenetetrahydrofolate is transferred onto alpha-ketoisovalerate to form ketopantoate. This Neisseria meningitidis serogroup A / serotype 4A (strain DSM 15465 / Z2491) protein is 3-methyl-2-oxobutanoate hydroxymethyltransferase.